The chain runs to 134 residues: Zinc finger protein 593 (134 aa).

Over residues 1–25 (MGRSRRTGAHRAHSLARQMKAKRRR) the composition is skewed to basic residues. Disordered stretches follow at residues 1–57 (MGRS…DLPG) and 82–134 (SKDH…DTST). A compositionally biased stretch (basic and acidic residues) spans 26-36 (PDLDEIHRELR). The C2H2-type zinc-finger motif lies at 61 to 85 (HRCLACARYFIDSTNLKTHFRSKDH).

The protein belongs to the ZNF593/BUD20 C2H2-type zinc-finger protein family. In terms of assembly, associates with pre-60S ribosomal particles. As to expression, ubiquitous. Detected in spleen, prostate, testis, small intestine, colon and to a minor level in thymus and peripheral blood leukocytes.

It is found in the nucleus. Its subcellular location is the nucleolus. The protein localises to the cytoplasm. Its function is as follows. Involved in pre-60S ribosomal particles maturation by promoting the nuclear export of the 60S ribosome. Negatively modulates the DNA binding activity of Oct-2 and therefore its transcriptional regulatory activity. The protein is Zinc finger protein 593 (ZNF593) of Homo sapiens (Human).